Consider the following 424-residue polypeptide: Tyrosine--tRNA ligase 1 (424 aa).

Position 37 (Tyr-37) interacts with L-tyrosine. The short motif at 42 to 51 (PTADSLHLGH) is the 'HIGH' region element. 2 residues coordinate L-tyrosine: Tyr-175 and Gln-179. A 'KMSKS' region motif is present at residues 235–239 (KFGKT). Lys-238 provides a ligand contact to ATP. One can recognise an S4 RNA-binding domain in the interval 357–414 (ADLQQALVNAGLVPSRGQARTMISSNAVAINGEKQSEPEYLFTDSNRLFDRYTLLRRG).

The protein belongs to the class-I aminoacyl-tRNA synthetase family. TyrS type 1 subfamily. In terms of assembly, homodimer.

The protein resides in the cytoplasm. The catalysed reaction is tRNA(Tyr) + L-tyrosine + ATP = L-tyrosyl-tRNA(Tyr) + AMP + diphosphate + H(+). Catalyzes the attachment of tyrosine to tRNA(Tyr) in a two-step reaction: tyrosine is first activated by ATP to form Tyr-AMP and then transferred to the acceptor end of tRNA(Tyr). The polypeptide is Tyrosine--tRNA ligase 1 (Photorhabdus laumondii subsp. laumondii (strain DSM 15139 / CIP 105565 / TT01) (Photorhabdus luminescens subsp. laumondii)).